A 113-amino-acid chain; its full sequence is Urocortin-2 (113 aa).

Residues 1–23 (MMTRWALVVFVVLMLDRILFVPG) form the signal peptide. The propeptide occupies 24–71 (TPIPTFQLLPQNSLETTPSSVTSESSSGTTTGPSASWSNSKASPYLDT). The segment covering 37–61 (LETTPSSVTSESSSGTTTGPSASWS) has biased composition (low complexity). Positions 37–64 (LETTPSSVTSESSSGTTTGPSASWSNSK) are disordered. A Valine amide; partial modification is found at Val-110.

The protein belongs to the sauvagine/corticotropin-releasing factor/urotensin I family. Binds with high affinity to CRF receptors 2-alpha and 2-beta. In terms of processing, glycosylated.

The protein resides in the secreted. Its function is as follows. Suppresses food intake, delays gastric emptying and decreases heat-induced edema. Might represent an endogenous ligand for maintaining homeostasis after stress. The polypeptide is Urocortin-2 (Ucn2) (Mus musculus (Mouse)).